Consider the following 263-residue polypeptide: MAKKMTITSIKKSKGVHPLVMITAYDALFARLLEPSADMILVGDSLNMSFAGRDDTLSATLSQMIYHTNAVAKGAKNSFIICDMPFGTYTNRDDALKNSIKVFQESSADALKIEGGEDKAEIISHLCSNGIAVCGHIGLLPQAFRSEGGYKVKGKTDEERIQLIRDAKAIEKAGAFCMVIEGVKADVAAQVAASVKIPVIGIGAGRDVDGQVLVFSDMLGLFEEFTPKFVKKYLDGASLVKEALKSYADEVKTRAFPQDIHTY.

Mg(2+)-binding residues include aspartate 44 and aspartate 83. 3-methyl-2-oxobutanoate is bound by residues 44 to 45 (DS), aspartate 83, and lysine 112. Glutamate 114 provides a ligand contact to Mg(2+). The active-site Proton acceptor is the glutamate 181.

The protein belongs to the PanB family. As to quaternary structure, homodecamer; pentamer of dimers. It depends on Mg(2+) as a cofactor.

The protein resides in the cytoplasm. The catalysed reaction is 3-methyl-2-oxobutanoate + (6R)-5,10-methylene-5,6,7,8-tetrahydrofolate + H2O = 2-dehydropantoate + (6S)-5,6,7,8-tetrahydrofolate. It participates in cofactor biosynthesis; (R)-pantothenate biosynthesis; (R)-pantoate from 3-methyl-2-oxobutanoate: step 1/2. In terms of biological role, catalyzes the reversible reaction in which hydroxymethyl group from 5,10-methylenetetrahydrofolate is transferred onto alpha-ketoisovalerate to form ketopantoate. This is 3-methyl-2-oxobutanoate hydroxymethyltransferase from Sulfurimonas denitrificans (strain ATCC 33889 / DSM 1251) (Thiomicrospira denitrificans (strain ATCC 33889 / DSM 1251)).